A 501-amino-acid chain; its full sequence is Lysine--tRNA ligase (501 aa).

The Mg(2+) site is built by Glu411 and Glu418.

Belongs to the class-II aminoacyl-tRNA synthetase family. In terms of assembly, homodimer. Requires Mg(2+) as cofactor.

It localises to the cytoplasm. The catalysed reaction is tRNA(Lys) + L-lysine + ATP = L-lysyl-tRNA(Lys) + AMP + diphosphate. The polypeptide is Lysine--tRNA ligase (Aliivibrio salmonicida (strain LFI1238) (Vibrio salmonicida (strain LFI1238))).